Reading from the N-terminus, the 406-residue chain is Cysteine desulfurase (406 aa).

Lys226 carries the post-translational modification N6-(pyridoxal phosphate)lysine. The Cysteine persulfide intermediate role is filled by Cys364.

It belongs to the class-V pyridoxal-phosphate-dependent aminotransferase family. Csd subfamily. As to quaternary structure, homodimer. Interacts with SufE and the SufBCD complex composed of SufB, SufC and SufD. The interaction with SufE is required to mediate the direct transfer of the sulfur atom from the S-sulfanylcysteine. It depends on pyridoxal 5'-phosphate as a cofactor.

The protein resides in the cytoplasm. It catalyses the reaction (sulfur carrier)-H + L-cysteine = (sulfur carrier)-SH + L-alanine. The catalysed reaction is L-selenocysteine + AH2 = hydrogenselenide + L-alanine + A + H(+). It functions in the pathway cofactor biosynthesis; iron-sulfur cluster biosynthesis. Functionally, cysteine desulfurases mobilize the sulfur from L-cysteine to yield L-alanine, an essential step in sulfur metabolism for biosynthesis of a variety of sulfur-containing biomolecules. Component of the suf operon, which is activated and required under specific conditions such as oxidative stress and iron limitation. Acts as a potent selenocysteine lyase in vitro, that mobilizes selenium from L-selenocysteine. Selenocysteine lyase activity is however unsure in vivo. The protein is Cysteine desulfurase of Salmonella agona (strain SL483).